The primary structure comprises 118 residues: Acidic phospholipase A2 (118 aa).

Positions 25, 27, and 29 each coordinate Ca(2+). The active site involves H45. D46 serves as a coordination point for Ca(2+). Residue D86 is part of the active site.

It belongs to the phospholipase A2 family. Group II subfamily. D49 sub-subfamily. Requires Ca(2+) as cofactor. Six disulfide bonds are present. As to expression, expressed by the venom gland.

It localises to the secreted. The catalysed reaction is a 1,2-diacyl-sn-glycero-3-phosphocholine + H2O = a 1-acyl-sn-glycero-3-phosphocholine + a fatty acid + H(+). Its function is as follows. PLA2 catalyzes the calcium-dependent hydrolysis of the 2-acyl groups in 3-sn-phosphoglycerides. This Bitis gabonica (Gaboon adder) protein is Acidic phospholipase A2.